We begin with the raw amino-acid sequence, 687 residues long: MSVRYPLLNRELGILGFNERVLAQAADPQVPLLERLRFICITSSNLDEFFEVRMAGLQEQIRDNPGALTPDGMSLQHAYDLVVERAQRLVHRQYTMLHETVLPALEQEGIYFHASDTWNDEQLEWARRYFLDELLPVLTPIGLDPAHPFPRVLNKSLNFVVELEGRDAFGRQAVMGIVQAPRALPRVVRMPHALSGFEHGFVLLSSFMQYFVGELFPQLTVKSCNQFRITRNSELFVDEDEITNLRVALQGELPARHLGNAVRLEVSADTPPHIVRRLLVESELGEKDCYRVAGSVNLVRLMQIPDLVDRPDLKFTPFTASTPSAITNAPTMFDAIDNGDILLHHPYESFQPVLELLQQAARDPSVVAIKQTIYRTGTDSPLMDALMEAARNGKEVTVVVELLARFDEETNINWASQLEAVGAHVVYGVVGHKCHAKMMLIVRRVVQAGKASLRRYVHLGTGNYHPRTARLYTDFGLMTADQKICEDVHHVFQQLTGIGGELTLHELWQSPFTLHPRIIDAIRVEIDNARAGKRARVVAKMNALLEPTVIAALYEASQAGVKVDLIVRGVCALKPGVPGLSENITVRSIVGRFLEHHRIYYFHANGAEDVYLSSADWMDRNLFRRVEVAFPIRDRKLKRRVIAEGLSVCLGDNQSAWQMHSDGHYRRRRAGKTIRNAQLGLLAKFCS.

ATP is bound at residue N45. Positions 375 and 405 each coordinate Mg(2+). Catalysis depends on H435, which acts as the Phosphohistidine intermediate. Y472, R568, and H596 together coordinate ATP.

This sequence belongs to the polyphosphate kinase 1 (PPK1) family. The cofactor is Mg(2+). An intermediate of this reaction is the autophosphorylated ppk in which a phosphate is covalently linked to a histidine residue through a N-P bond.

The catalysed reaction is [phosphate](n) + ATP = [phosphate](n+1) + ADP. In terms of biological role, catalyzes the reversible transfer of the terminal phosphate of ATP to form a long-chain polyphosphate (polyP). This Burkholderia lata (strain ATCC 17760 / DSM 23089 / LMG 22485 / NCIMB 9086 / R18194 / 383) protein is Polyphosphate kinase.